The following is a 186-amino-acid chain: ATP synthase subunit delta (186 aa).

Belongs to the ATPase delta chain family. In terms of assembly, F-type ATPases have 2 components, F(1) - the catalytic core - and F(0) - the membrane proton channel. F(1) has five subunits: alpha(3), beta(3), gamma(1), delta(1), epsilon(1). F(0) has three main subunits: a(1), b(2) and c(10-14). The alpha and beta chains form an alternating ring which encloses part of the gamma chain. F(1) is attached to F(0) by a central stalk formed by the gamma and epsilon chains, while a peripheral stalk is formed by the delta and b chains.

It is found in the cell inner membrane. Functionally, f(1)F(0) ATP synthase produces ATP from ADP in the presence of a proton or sodium gradient. F-type ATPases consist of two structural domains, F(1) containing the extramembraneous catalytic core and F(0) containing the membrane proton channel, linked together by a central stalk and a peripheral stalk. During catalysis, ATP synthesis in the catalytic domain of F(1) is coupled via a rotary mechanism of the central stalk subunits to proton translocation. In terms of biological role, this protein is part of the stalk that links CF(0) to CF(1). It either transmits conformational changes from CF(0) to CF(1) or is implicated in proton conduction. The sequence is that of ATP synthase subunit delta from Leptospira interrogans serogroup Icterohaemorrhagiae serovar copenhageni (strain Fiocruz L1-130).